The following is a 119-amino-acid chain: Putative membrane protein insertion efficiency factor (119 aa).

This sequence belongs to the UPF0161 family.

Its subcellular location is the cell inner membrane. Could be involved in insertion of integral membrane proteins into the membrane. This is Putative membrane protein insertion efficiency factor from Agrobacterium fabrum (strain C58 / ATCC 33970) (Agrobacterium tumefaciens (strain C58)).